The primary structure comprises 456 residues: Zinc finger C2HC domain-containing protein 1C (456 aa).

2 disordered regions span residues 16 to 46 (MLPH…QSLK) and 85 to 113 (YPHC…SSGP). Composition is skewed to polar residues over residues 35–46 (YEQGDSSQQSLK) and 90–102 (GISQ…DSQG). Positions 211–265 (VQIRRLEAAGESLEEEIRRKQILLRGKLKKTEEELRRIQTQKEQAKENENGELQK) form a coiled coil. The disordered stretch occupies residues 336 to 388 (NKIRDPVSEPSVEKFSPPSETPVGALQGSARNSSLSMAPDSSGSSGSIEEPQL). The segment covering 368–382 (SSLSMAPDSSGSSGS) has biased composition (low complexity). Residues 387–416 (QLGECSHCGRKFLSFRLERHSNICSRMRGS) form a C2HC/C3H-type zinc finger. Zn(2+) contacts are provided by C391, C394, H406, and C410.

Belongs to the ZC2HC1 family. The cofactor is Zn(2+).

The sequence is that of Zinc finger C2HC domain-containing protein 1C (ZC2HC1C) from Homo sapiens (Human).